Reading from the N-terminus, the 156-residue chain is Endogenous retrovirus group K member 19 Pro protein (156 aa).

A Peptidase A2 domain is found at 21–96; it reads FEGLVDTGAD…IPLNLWGRDL (76 aa). Asp26 is an active-site residue. Residues 111-156 form the G-patch domain; the sequence is YSPTSQKIMTKMGYILGKGLGKNEDGIKIPVEAKINQKREGIGYPF.

Belongs to the peptidase A2 family. HERV class-II K(HML-2) subfamily. As to quaternary structure, active as a homodimer. Post-translationally, autoproteolytically processed at the N-terminus. Expected C-terminal autoprocessing not detected. The sequence shown is that of the processed Pro protein.

The catalysed reaction is Processing at the authentic HIV-1 PR recognition site and release of the mature p17 matrix and the p24 capsid protein, as a result of the cleavage of the -SQNY-|-PIVQ- cleavage site.. Functionally, retroviral proteases have roles in the processing of the primary translation products and the maturation of the viral particle. Endogenous Pro proteins may have kept, lost or modified their original function during evolution. This Homo sapiens (Human) protein is Endogenous retrovirus group K member 19 Pro protein (ERVK-19).